The primary structure comprises 161 residues: Ferric uptake regulation protein 1 (161 aa).

Zn(2+) is bound by residues C94 and C97.

The protein belongs to the Fur family.

The protein resides in the cytoplasm. Acts as a global negative controlling element, employing Fe(2+) as a cofactor to bind the operator of the repressed genes. The chain is Ferric uptake regulation protein 1 (fur1) from Mycolicibacterium fortuitum (Mycobacterium fortuitum).